Reading from the N-terminus, the 238-residue chain is Membrane protein 2 (238 aa).

It belongs to the varicellovirus ORF2 protein family. Phosphorylated by host.

It is found in the host membrane. In Varicella-zoster virus (strain Dumas) (HHV-3), this protein is Membrane protein 2.